Here is a 688-residue protein sequence, read N- to C-terminus: DNA-directed RNA polymerase subunit beta' (688 aa).

The Zn(2+) site is built by Cys69, Cys71, Cys87, and Cys90. Positions 497, 499, and 501 each coordinate Mg(2+).

This sequence belongs to the RNA polymerase beta' chain family. RpoC1 subfamily. In plastids the minimal PEP RNA polymerase catalytic core is composed of four subunits: alpha, beta, beta', and beta''. When a (nuclear-encoded) sigma factor is associated with the core the holoenzyme is formed, which can initiate transcription. The cofactor is Mg(2+). Zn(2+) is required as a cofactor.

It localises to the plastid. It is found in the chloroplast. It catalyses the reaction RNA(n) + a ribonucleoside 5'-triphosphate = RNA(n+1) + diphosphate. Its function is as follows. DNA-dependent RNA polymerase catalyzes the transcription of DNA into RNA using the four ribonucleoside triphosphates as substrates. In Sinapis alba (White mustard), this protein is DNA-directed RNA polymerase subunit beta'.